The following is a 312-amino-acid chain: Glyoxylate/hydroxypyruvate reductase A (312 aa).

R227 is a catalytic residue. H275 serves as the catalytic Proton donor.

Belongs to the D-isomer specific 2-hydroxyacid dehydrogenase family. GhrA subfamily.

Its subcellular location is the cytoplasm. The catalysed reaction is glycolate + NADP(+) = glyoxylate + NADPH + H(+). It catalyses the reaction (R)-glycerate + NAD(+) = 3-hydroxypyruvate + NADH + H(+). It carries out the reaction (R)-glycerate + NADP(+) = 3-hydroxypyruvate + NADPH + H(+). Catalyzes the NADPH-dependent reduction of glyoxylate and hydroxypyruvate into glycolate and glycerate, respectively. The protein is Glyoxylate/hydroxypyruvate reductase A of Escherichia coli (strain 55989 / EAEC).